The following is a 289-amino-acid chain: 4-diphosphocytidyl-2-C-methyl-D-erythritol kinase (289 aa).

Lysine 10 is an active-site residue. 94–104 (PVAAGLAGGSS) serves as a coordination point for ATP. The active site involves aspartate 136.

Belongs to the GHMP kinase family. IspE subfamily.

The enzyme catalyses 4-CDP-2-C-methyl-D-erythritol + ATP = 4-CDP-2-C-methyl-D-erythritol 2-phosphate + ADP + H(+). Its pathway is isoprenoid biosynthesis; isopentenyl diphosphate biosynthesis via DXP pathway; isopentenyl diphosphate from 1-deoxy-D-xylulose 5-phosphate: step 3/6. In terms of biological role, catalyzes the phosphorylation of the position 2 hydroxy group of 4-diphosphocytidyl-2C-methyl-D-erythritol. The chain is 4-diphosphocytidyl-2-C-methyl-D-erythritol kinase from Bacillus mycoides (strain KBAB4) (Bacillus weihenstephanensis).